Here is a 335-residue protein sequence, read N- to C-terminus: ADP-L-glycero-D-manno-heptose-6-epimerase (335 aa).

Residues 11 to 12, 32 to 33, Lys39, 75 to 79, and Asn92 contribute to the NADP(+) site; these read FI, DD, and EGACS. Tyr139 acts as the Proton acceptor in catalysis. Lys143 provides a ligand contact to NADP(+). Position 172 (Asn172) interacts with substrate. NADP(+)-binding residues include Val173 and Lys181. Catalysis depends on Lys181, which acts as the Proton acceptor. Residues Arg183, His190, 204 to 207, Arg217, and Tyr296 contribute to the substrate site; that span reads FGDY.

It belongs to the NAD(P)-dependent epimerase/dehydratase family. HldD subfamily. As to quaternary structure, homopentamer. The cofactor is NADP(+).

The catalysed reaction is ADP-D-glycero-beta-D-manno-heptose = ADP-L-glycero-beta-D-manno-heptose. The protein operates within nucleotide-sugar biosynthesis; ADP-L-glycero-beta-D-manno-heptose biosynthesis; ADP-L-glycero-beta-D-manno-heptose from D-glycero-beta-D-manno-heptose 7-phosphate: step 4/4. Its function is as follows. Catalyzes the interconversion between ADP-D-glycero-beta-D-manno-heptose and ADP-L-glycero-beta-D-manno-heptose via an epimerization at carbon 6 of the heptose. In Polaromonas naphthalenivorans (strain CJ2), this protein is ADP-L-glycero-D-manno-heptose-6-epimerase.